Here is a 447-residue protein sequence, read N- to C-terminus: Na(+)-translocating NADH-quinone reductase subunit A (447 aa).

This sequence belongs to the NqrA family. Composed of six subunits; NqrA, NqrB, NqrC, NqrD, NqrE and NqrF.

It carries out the reaction a ubiquinone + n Na(+)(in) + NADH + H(+) = a ubiquinol + n Na(+)(out) + NAD(+). NQR complex catalyzes the reduction of ubiquinone-1 to ubiquinol by two successive reactions, coupled with the transport of Na(+) ions from the cytoplasm to the periplasm. NqrA to NqrE are probably involved in the second step, the conversion of ubisemiquinone to ubiquinol. The chain is Na(+)-translocating NADH-quinone reductase subunit A from Neisseria gonorrhoeae (strain NCCP11945).